A 248-amino-acid polypeptide reads, in one-letter code: Triosephosphate isomerase (248 aa).

9 to 11 is a substrate binding site; it reads NWK. The Electrophile role is filled by H94. The active-site Proton acceptor is the E166. Residues G172, S212, and 233–234 each bind substrate; that span reads GG.

It belongs to the triosephosphate isomerase family. Homodimer.

It localises to the cytoplasm. It catalyses the reaction D-glyceraldehyde 3-phosphate = dihydroxyacetone phosphate. The protein operates within carbohydrate biosynthesis; gluconeogenesis. Its pathway is carbohydrate degradation; glycolysis; D-glyceraldehyde 3-phosphate from glycerone phosphate: step 1/1. Its function is as follows. Involved in the gluconeogenesis. Catalyzes stereospecifically the conversion of dihydroxyacetone phosphate (DHAP) to D-glyceraldehyde-3-phosphate (G3P). The protein is Triosephosphate isomerase of Clostridium botulinum (strain Loch Maree / Type A3).